A 358-amino-acid polypeptide reads, in one-letter code: Protein-glutamate methylesterase/protein-glutamine glutaminase 1 (358 aa).

Positions 8-125 (RVLIVDDSAV…ARGLEGYAEE (118 aa)) constitute a Response regulatory domain. At Asp59 the chain carries 4-aspartylphosphate. The CheB-type methylesterase domain maps to 157–352 (PVPGSALRFR…LERVAERLIA (196 aa)). Catalysis depends on residues Ser177, His203, and Asp299.

This sequence belongs to the CheB family. In terms of processing, phosphorylated by CheA. Phosphorylation of the N-terminal regulatory domain activates the methylesterase activity.

The protein localises to the cytoplasm. The catalysed reaction is [protein]-L-glutamate 5-O-methyl ester + H2O = L-glutamyl-[protein] + methanol + H(+). It catalyses the reaction L-glutaminyl-[protein] + H2O = L-glutamyl-[protein] + NH4(+). Involved in chemotaxis. Part of a chemotaxis signal transduction system that modulates chemotaxis in response to various stimuli. Catalyzes the demethylation of specific methylglutamate residues introduced into the chemoreceptors (methyl-accepting chemotaxis proteins or MCP) by CheR. Also mediates the irreversible deamidation of specific glutamine residues to glutamic acid. The protein is Protein-glutamate methylesterase/protein-glutamine glutaminase 1 of Xanthomonas campestris pv. campestris (strain ATCC 33913 / DSM 3586 / NCPPB 528 / LMG 568 / P 25).